A 201-amino-acid chain; its full sequence is UPF0301 protein Arad_1256 (201 aa).

It belongs to the UPF0301 (AlgH) family.

The sequence is that of UPF0301 protein Arad_1256 from Rhizobium rhizogenes (strain K84 / ATCC BAA-868) (Agrobacterium radiobacter).